Consider the following 235-residue polypeptide: Glycerol-3-phosphate acyltransferase (235 aa).

Helical transmembrane passes span 4–24 (LLAILTVSYIIGSIPTSIMAG), 56–76 (TVTLIDIVKGVVAAVSVVAFF), 94–114 (LLAGMSAVIGHVFTVFAGFKG), 126–146 (IGIAPVSMLMVIGIFLLTVWF), 152–172 (VASIFAAVAFPLIIAIRKYVF), and 194–214 (SLDYHLIIFGLLVAFAILFTH).

It belongs to the PlsY family. In terms of assembly, probably interacts with PlsX.

The protein resides in the cell inner membrane. It catalyses the reaction an acyl phosphate + sn-glycerol 3-phosphate = a 1-acyl-sn-glycero-3-phosphate + phosphate. It participates in lipid metabolism; phospholipid metabolism. Catalyzes the transfer of an acyl group from acyl-phosphate (acyl-PO(4)) to glycerol-3-phosphate (G3P) to form lysophosphatidic acid (LPA). This enzyme utilizes acyl-phosphate as fatty acyl donor, but not acyl-CoA or acyl-ACP. This is Glycerol-3-phosphate acyltransferase from Chlorobium phaeovibrioides (strain DSM 265 / 1930) (Prosthecochloris vibrioformis (strain DSM 265)).